The following is an 862-amino-acid chain: Protein translocase subunit SecA (862 aa).

ATP contacts are provided by residues Q86, 104–108 (GEGKT), and D499. Positions 848, 850, 859, and 860 each coordinate Zn(2+).

This sequence belongs to the SecA family. As to quaternary structure, monomer and homodimer. Part of the essential Sec protein translocation apparatus which comprises SecA, SecYEG and auxiliary proteins SecDF-YajC and YidC. Requires Zn(2+) as cofactor.

It is found in the cell inner membrane. The protein localises to the cytoplasm. The catalysed reaction is ATP + H2O + cellular proteinSide 1 = ADP + phosphate + cellular proteinSide 2.. Functionally, part of the Sec protein translocase complex. Interacts with the SecYEG preprotein conducting channel. Has a central role in coupling the hydrolysis of ATP to the transfer of proteins into and across the cell membrane, serving both as a receptor for the preprotein-SecB complex and as an ATP-driven molecular motor driving the stepwise translocation of polypeptide chains across the membrane. In Ehrlichia chaffeensis (strain ATCC CRL-10679 / Arkansas), this protein is Protein translocase subunit SecA.